A 448-amino-acid polypeptide reads, in one-letter code: Hyaluronidase conohyal-Cn1 (448 aa).

Residues 1-18 form the signal peptide; that stretch reads MRAVVVVTGLVVVVVATA. The propeptide occupies 19–33; sequence LSLPNHDVKSATSSR. The tract at residues 26–55 is disordered; it reads VKSATSSRSSSDYQGSSGDDCDEGLPPPDQ. Over residues 31 to 43 the composition is skewed to low complexity; sequence SSRSSSDYQGSSG. Residues Cys-67 and Cys-344 are joined by a disulfide bond. Asn-141 carries an N-linked (GlcNAc...) asparagine glycan. Glu-151 serves as the catalytic Proton donor. N-linked (GlcNAc...) asparagine glycans are attached at residues Asn-169 and Asn-361. Disulfide bonds link Cys-369–Cys-380, Cys-374–Cys-413, and Cys-415–Cys-424. In terms of domain architecture, EGF-like spans 413–424; that stretch reads CRCYSAWEGACC.

Belongs to the glycosyl hydrolase 56 family. Expressed by the venom duct.

The protein resides in the secreted. It catalyses the reaction Random hydrolysis of (1-&gt;4)-linkages between N-acetyl-beta-D-glucosamine and D-glucuronate residues in hyaluronate.. Functionally, hyaluronidase catalyzes the hydrolysis of hyaluronic acid (HA), an anionic, nonsulfated glycosaminoglycan distributed widely throughout connective, epithelial, and neural tissues. In venom, they are known to enhance diffusion of the venom by degrading the extracellular matrix. This Conus consors (Singed cone) protein is Hyaluronidase conohyal-Cn1.